Here is a 222-residue protein sequence, read N- to C-terminus: MKFNFITLFPEKIQSYFSEGLQQKAIESGIFSINTIQLRDFSGNKHNRVDDTIYGGGPGMLLRVEPIHKALLSLGENKGIVILTSPSGIPFHQGIANKLKETGKPLTFISGYYEGVDHRVAEHLVDMEMSLGNYVISAGDLASICIADAVSRLLPGFLGAGESLLDESHNYPDVLEYPQFTKPSEYNGWKVPEVLLSGNHASILAWREQNRKKIDPDQERKL.

Residues G111 and 131 to 136 each bind S-adenosyl-L-methionine; that span reads LGNYVI.

This sequence belongs to the RNA methyltransferase TrmD family. In terms of assembly, homodimer.

Its subcellular location is the cytoplasm. It catalyses the reaction guanosine(37) in tRNA + S-adenosyl-L-methionine = N(1)-methylguanosine(37) in tRNA + S-adenosyl-L-homocysteine + H(+). Functionally, specifically methylates guanosine-37 in various tRNAs. This chain is tRNA (guanine-N(1)-)-methyltransferase, found in Leptospira borgpetersenii serovar Hardjo-bovis (strain JB197).